A 254-amino-acid polypeptide reads, in one-letter code: 4-hydroxy-tetrahydrodipicolinate reductase (254 aa).

Gly-7–Ile-12 contacts NAD(+). Residue Arg-35 participates in NADP(+) binding. NAD(+)-binding positions include Gly-91–Thr-93 and Ala-115–Met-118. His-147 serves as the catalytic Proton donor/acceptor. Position 148 (His-148) interacts with (S)-2,3,4,5-tetrahydrodipicolinate. Residue Lys-151 is the Proton donor of the active site. A (S)-2,3,4,5-tetrahydrodipicolinate-binding site is contributed by Gly-157–Thr-158.

It belongs to the DapB family.

It is found in the cytoplasm. The catalysed reaction is (S)-2,3,4,5-tetrahydrodipicolinate + NAD(+) + H2O = (2S,4S)-4-hydroxy-2,3,4,5-tetrahydrodipicolinate + NADH + H(+). It catalyses the reaction (S)-2,3,4,5-tetrahydrodipicolinate + NADP(+) + H2O = (2S,4S)-4-hydroxy-2,3,4,5-tetrahydrodipicolinate + NADPH + H(+). The protein operates within amino-acid biosynthesis; L-lysine biosynthesis via DAP pathway; (S)-tetrahydrodipicolinate from L-aspartate: step 4/4. In terms of biological role, catalyzes the conversion of 4-hydroxy-tetrahydrodipicolinate (HTPA) to tetrahydrodipicolinate. The polypeptide is 4-hydroxy-tetrahydrodipicolinate reductase (Helicobacter acinonychis (strain Sheeba)).